Here is a 220-residue protein sequence, read N- to C-terminus: Uracil-DNA glycosylase 2 (220 aa).

D65 functions as the Proton acceptor in the catalytic mechanism.

It belongs to the uracil-DNA glycosylase (UDG) superfamily. UNG family.

Its subcellular location is the cytoplasm. The enzyme catalyses Hydrolyzes single-stranded DNA or mismatched double-stranded DNA and polynucleotides, releasing free uracil.. In terms of biological role, excises uracil residues from the DNA which can arise as a result of misincorporation of dUMP residues by DNA polymerase or due to deamination of cytosine. This Bacteroides fragilis (strain ATCC 25285 / DSM 2151 / CCUG 4856 / JCM 11019 / LMG 10263 / NCTC 9343 / Onslow / VPI 2553 / EN-2) protein is Uracil-DNA glycosylase 2.